The sequence spans 545 residues: Ubiquitin carboxyl-terminal hydrolase 17-like protein D (545 aa).

Residues 51–348 (CGLQNTGNSC…NAYVLFYVQQ (298 aa)) enclose the USP domain. Cysteine 60 (nucleophile) is an active-site residue. Histidine 307 acts as the Proton acceptor in catalysis. 2 disordered regions span residues 367–443 (LDPE…KLGQ) and 521–545 (RQEGRRRSKKGKNKNKQGQKLLLVR). Basic residues predominate over residues 374–385 (KKSRRKKHKKKS). The span at 393–404 (EPSKNREKKATK) shows a compositional bias: basic and acidic residues. The span at 524–537 (GRRRSKKGKNKNKQ) shows a compositional bias: basic residues.

This sequence belongs to the peptidase C19 family. USP17 subfamily. Detected in T-cell, myeloid, and embryonic stem cell lines.

It is found in the nucleus. Its subcellular location is the endoplasmic reticulum. It catalyses the reaction Thiol-dependent hydrolysis of ester, thioester, amide, peptide and isopeptide bonds formed by the C-terminal Gly of ubiquitin (a 76-residue protein attached to proteins as an intracellular targeting signal).. Its function is as follows. Deubiquitinating enzyme that removes conjugated ubiquitin from specific proteins to regulate different cellular processes that may include cell proliferation, progression through the cell cycle, apoptosis, cell migration, and the cellular response to viral infection. The chain is Ubiquitin carboxyl-terminal hydrolase 17-like protein D from Mus musculus (Mouse).